The chain runs to 168 residues: Pathogenesis-related protein 1C (168 aa).

The N-terminal stretch at 1-30 (MEFVLFSQMSSFFLVSTLLLFLIISHSCHA) is a signal peptide. The SCP domain maps to 38–156 (LDAHNTARAD…NGGYIVSCNY (119 aa)).

The protein belongs to the CRISP family. In terms of processing, three disulfide bonds are present.

The protein localises to the vacuole. Its function is as follows. Probably involved in the defense reaction of plants against pathogens. This is Pathogenesis-related protein 1C from Nicotiana tabacum (Common tobacco).